The primary structure comprises 358 residues: Mannonate dehydratase (358 aa).

This sequence belongs to the mannonate dehydratase family. Requires Fe(2+) as cofactor. The cofactor is Mn(2+).

The catalysed reaction is D-mannonate = 2-dehydro-3-deoxy-D-gluconate + H2O. Its pathway is carbohydrate metabolism; pentose and glucuronate interconversion. In terms of biological role, catalyzes the dehydration of D-mannonate. This chain is Mannonate dehydratase, found in Lachnoclostridium phytofermentans (strain ATCC 700394 / DSM 18823 / ISDg) (Clostridium phytofermentans).